We begin with the raw amino-acid sequence, 340 residues long: Biotin synthase (340 aa).

Residues 56-283 (NAVQLSTLLS…KAVVRLSAGR (228 aa)) enclose the Radical SAM core domain. [4Fe-4S] cluster is bound by residues cysteine 71, cysteine 75, and cysteine 78. The [2Fe-2S] cluster site is built by cysteine 115, cysteine 146, cysteine 206, and arginine 278.

It belongs to the radical SAM superfamily. Biotin synthase family. As to quaternary structure, homodimer. The cofactor is [4Fe-4S] cluster. [2Fe-2S] cluster is required as a cofactor.

It carries out the reaction (4R,5S)-dethiobiotin + (sulfur carrier)-SH + 2 reduced [2Fe-2S]-[ferredoxin] + 2 S-adenosyl-L-methionine = (sulfur carrier)-H + biotin + 2 5'-deoxyadenosine + 2 L-methionine + 2 oxidized [2Fe-2S]-[ferredoxin]. It participates in cofactor biosynthesis; biotin biosynthesis; biotin from 7,8-diaminononanoate: step 2/2. Its function is as follows. Catalyzes the conversion of dethiobiotin (DTB) to biotin by the insertion of a sulfur atom into dethiobiotin via a radical-based mechanism. This chain is Biotin synthase, found in Burkholderia lata (strain ATCC 17760 / DSM 23089 / LMG 22485 / NCIMB 9086 / R18194 / 383).